Reading from the N-terminus, the 71-residue chain is Frenatin 2.3S (71 aa).

A signal peptide spans 1-22; that stretch reads MAFLKKSLFLVLFLGLVSLSMG. A disordered region spans residues 21 to 56; it reads MGEREKREEEEEEEEENKEEEANEEGKGESEEKRGL. Positions 23–54 are excised as a propeptide; that stretch reads EREKREEEEEEEEENKEEEANEEGKGESEEKR. The segment covering 28–43 has biased composition (acidic residues); that stretch reads EEEEEEEEENKEEEAN. Positions 44 to 55 are enriched in basic and acidic residues; the sequence is EEGKGESEEKRG. Glycine 70 is subject to Glycine amide; in Frenatin 2.1S.

This sequence belongs to the frog skin active peptide (FSAP) family. Frenatin subfamily. Post-translationally, frenatin 2.3S is not amidated. Expressed by the skin glands.

It localises to the secreted. Its function is as follows. Antimicrobial peptide with potent activity against Gram-negative bacteria. Shows immunostimulatory actions both in vitro and in vivo. In vitro, is cytotoxic to non-small cell lung adenocarcinoma A549 cells. Also, stimulates production of pro-inflammatory cytokines by mouse peritoneal macrophages and down-regulates production of the anti-inflammatory cytokine IL-10 by lipopolysaccharide (LPS)-stimulated cells. In vivo, intraperitoneal injection in mice enhances the activation state and homing capacity of Th1 type lymphocytes and promotes the recruitment, activation and tumoricidal capacities of peritoneal NK cells. Has a very weak activity in stimulation of insulin release and a weak hemolytic activity. In terms of biological role, antimicrobial peptide with potent activity against some Gram-positive and Gram-negative bacteria. Has a multifunctional mode of action. It displays depolarization and bacterial cell leakage, and can also internalize into bacterial cells and alter specific gene expression involved in bacterial resistance mechanisms. Does not agglutinate bacteria and lipid vesicles, even a high concentrations. Also displays moderate cellular protection against yellow fever virus (YFV)-infected Vero cells without causing significant cytotoxicity. Shows a weak hemolytic activity, and is not cytotoxic to monocytes. Frenatin 2.3S (version without Gly-71) shows no or very weak antibacterial activity, shows no or very weak cytotoxicity to lung adenocarcinoma A549 cells and shows very weak hemolysis. It only stimulates production of pro-inflammatory cytokines IL-23 (but not IL-1beta and TNF-alpha) by mouse peritoneal macrophages and has no effect on the production of the anti-inflammatory cytokine IL-10. Frenatin 2.3S (version without Gly-71) very weakly stimulates insulin release. The protein is Frenatin 2.3S of Sphaenorhynchus lacteus (Orinoco lime treefrog).